A 194-amino-acid chain; its full sequence is FMN-dependent NADH:quinone oxidoreductase (194 aa).

Residues Ser-10 and Met-90–Leu-93 contribute to the FMN site.

This sequence belongs to the azoreductase type 1 family. As to quaternary structure, homodimer. It depends on FMN as a cofactor.

The catalysed reaction is 2 a quinone + NADH + H(+) = 2 a 1,4-benzosemiquinone + NAD(+). It catalyses the reaction N,N-dimethyl-1,4-phenylenediamine + anthranilate + 2 NAD(+) = 2-(4-dimethylaminophenyl)diazenylbenzoate + 2 NADH + 2 H(+). Functionally, quinone reductase that provides resistance to thiol-specific stress caused by electrophilic quinones. In terms of biological role, also exhibits azoreductase activity. Catalyzes the reductive cleavage of the azo bond in aromatic azo compounds to the corresponding amines. The chain is FMN-dependent NADH:quinone oxidoreductase from Haemophilus influenzae (strain PittEE).